We begin with the raw amino-acid sequence, 158 residues long: Small ribosomal subunit protein eS10 (158 aa).

Residues 99-158 (ETVRRGAVGRPDAPARSAEDRSAYRRAPTTPAAHDKKADVGPGSADLEFRGGFGRGRPAP) form a disordered region. A compositionally biased stretch (gly residues) spans 149–158 (GGFGRGRPAP).

Belongs to the eukaryotic ribosomal protein eS10 family.

It localises to the cytoplasm. This Spodoptera frugiperda (Fall armyworm) protein is Small ribosomal subunit protein eS10 (RpS10).